Reading from the N-terminus, the 352-residue chain is Protein RecA (352 aa).

65–72 provides a ligand contact to ATP; sequence GPESSGKT.

The protein belongs to the RecA family.

It is found in the cytoplasm. Can catalyze the hydrolysis of ATP in the presence of single-stranded DNA, the ATP-dependent uptake of single-stranded DNA by duplex DNA, and the ATP-dependent hybridization of homologous single-stranded DNAs. It interacts with LexA causing its activation and leading to its autocatalytic cleavage. This Pseudomonas fluorescens (strain SBW25) protein is Protein RecA.